A 989-amino-acid chain; its full sequence is E3 ubiquitin-protein ligase Arkadia (989 aa).

Glycyl lysine isopeptide (Lys-Gly) (interchain with G-Cter in SUMO2) cross-links involve residues lysine 19, lysine 33, lysine 46, lysine 58, lysine 72, lysine 86, lysine 95, and lysine 109. The segment at 63–195 is disordered; sequence FSHLCDDSQK…TEADPVPSLL (133 aa). A compositionally biased stretch (basic and acidic residues) spans 65–88; sequence HLCDDSQKQEKDMTGNQQEQEKSG. Polar residues predominate over residues 97-109; sequence QQAGPSYVQNCVK. The span at 110-120 shows a compositional bias: basic and acidic residues; the sequence is ENQEILGRRQQ. Residues 131–144 show a composition bias toward low complexity; that stretch reads SSLSECLSSPSSSL. Lysine 172 participates in a covalent cross-link: Glycyl lysine isopeptide (Lys-Gly) (interchain with G-Cter in SUMO2). Positions 173–183 are enriched in basic residues; it reads SRSHSARSHKW. Glycyl lysine isopeptide (Lys-Gly) (interchain with G-Cter in SUMO2) cross-links involve residues lysine 197 and lysine 217. The disordered stretch occupies residues 213 to 293; that stretch reads KRLVKSSSSQ…PSNPAAPSGS (81 aa). Positions 240-402 are interaction with AXIN1; that stretch reads ALAQRKYALL…VPTTSARMDS (163 aa). 2 stretches are compositionally biased toward low complexity: residues 248–270 and 278–291; these read LLSS…SSST and ASAS…AAPS. The SUMO interaction motif 1 (SIM) signature appears at 298–302; sequence VVVIE. The SUMO interaction motif 2 (SIM) motif lies at 323–329; it reads EVEIVTV. A disordered region spans residues 335 to 367; it reads SRSTLGHSRSHWSQGSSSHTGRPQESRNRSRIS. Low complexity predominate over residues 345-355; the sequence is HWSQGSSSHTG. An SUMO interaction motif 3 (SIM) motif is present at residues 380–384; sequence VVDLT. 3 disordered regions span residues 388–475, 506–559, and 641–675; these read DEPT…MPRL, HGHH…YHDQ, and MPPP…PPPQ. The span at 393–451 shows a compositional bias: polar residues; that stretch reads VPTTSARMDSQTTSASINNSNPSTSEQASDTTSTVASSQPSTVSETEATLTSNSATGSS. Residues 506-520 show a composition bias toward basic residues; the sequence is HGHHFQHHHHHHHTP. Positions 548-558 are enriched in polar residues; that stretch reads ANSSSGSSYHD. The segment at 902 to 904 is ubiquitin binding; that stretch reads YPH. Residues lysine 918 and lysine 922 each participate in a glycyl lysine isopeptide (Lys-Gly) (interchain with G-Cter in SUMO2) cross-link. Zn(2+) is bound by residues cysteine 937 and cysteine 940. The RING-type; atypical zinc-finger motif lies at 937–978; sequence CTICLSILEEGEDVRRLPCMHLFHQVCVDQWLITNKKCPICR. The segment at 952–956 is ubiquitin binding; that stretch reads RLPCM. 2 residues coordinate Zn(2+): histidine 960 and cysteine 963.

Belongs to the Arkadia family. As to quaternary structure, monomer. Interacts with SMAD6, SMAD7, AXIN1, AXIN2 and SKIL isoform SNON. Interacts with (phosphorylated) SMAD2 and SMAD3. Part of a complex containing RNF111, AXIN1 and SMAD7. Interacts (via SIM domains) with SUMO1 and SUMO2. In terms of tissue distribution, ubiquitously expressed.

The protein resides in the nucleus. It localises to the cytoplasm. It is found in the PML body. The catalysed reaction is S-ubiquitinyl-[E2 ubiquitin-conjugating enzyme]-L-cysteine + [acceptor protein]-L-lysine = [E2 ubiquitin-conjugating enzyme]-L-cysteine + N(6)-ubiquitinyl-[acceptor protein]-L-lysine.. It functions in the pathway protein modification; protein ubiquitination. Binds free ubiquitin non-covalently via its RING-type zinc finger. Ubiquitin-binding leads to enhance the E3 ubiquitin-protein ligase activity by stabilizing the ubiquitin-conjugating enzyme E2 (donor ubiquitin) in the 'closed' conformation and activating ubiquitin transfer. Functionally, E3 ubiquitin-protein ligase required for mesoderm patterning during embryonic development. Acts as an enhancer of the transcriptional responses of the SMAD2/SMAD3 effectors, which are activated downstream of BMP. Acts by mediating ubiquitination and degradation of SMAD inhibitors such as SMAD7, inducing their proteasomal degradation and thereby enhancing the transcriptional activity of TGF-beta and BMP. In addition to enhance transcription of SMAD2/SMAD3 effectors, also regulates their turnover by mediating their ubiquitination and subsequent degradation, coupling their activation with degradation, thereby ensuring that only effectors 'in use' are degraded. Activates SMAD3/SMAD4-dependent transcription by triggering signal-induced degradation of SNON isoform of SKIL. Associates with UBE2D2 as an E2 enzyme. Specifically binds polysumoylated chains via SUMO interaction motifs (SIMs) and mediates ubiquitination of sumoylated substrates. Catalyzes 'Lys-63'-linked ubiquitination of sumoylated XPC in response to UV irradiation, promoting nucleotide excision repair. Mediates ubiquitination and degradation of sumoylated PML. The regulation of the BMP-SMAD signaling is however independent of sumoylation and is not dependent of SUMO interaction motifs (SIMs). The chain is E3 ubiquitin-protein ligase Arkadia from Mus musculus (Mouse).